The primary structure comprises 24 residues: Humanin-like 7 (24 aa).

Belongs to the humanin family. In terms of tissue distribution, expressed in testis.

It localises to the secreted. The protein localises to the cytoplasm. Functionally, plays a role as a neuroprotective and antiapoptotic factor. The protein is Humanin-like 7 of Homo sapiens (Human).